The primary structure comprises 169 residues: Large ribosomal subunit protein uL5 (169 aa).

This sequence belongs to the universal ribosomal protein uL5 family. Part of the 50S ribosomal subunit; contacts the 5S rRNA and probably tRNA. Forms a bridge to the 30S subunit in the 70S ribosome.

Its function is as follows. This is one of the proteins that bind and probably mediate the attachment of the 5S RNA into the large ribosomal subunit, where it forms part of the central protuberance. In the 70S ribosome it contacts protein S13 of the 30S subunit (bridge B1b), connecting the 2 subunits; this bridge is implicated in subunit movement. May contact the P site tRNA; the 5S rRNA and some of its associated proteins might help stabilize positioning of ribosome-bound tRNAs. This is Large ribosomal subunit protein uL5 from Methanosarcina mazei (strain ATCC BAA-159 / DSM 3647 / Goe1 / Go1 / JCM 11833 / OCM 88) (Methanosarcina frisia).